The primary structure comprises 111 residues: Universal stress protein B (111 aa).

The next 2 helical transmembrane spans lie at 1 to 21 (MINT…NMLR) and 90 to 110 (FILT…LMLW).

It belongs to the universal stress protein B family.

Its subcellular location is the cell inner membrane. In Edwardsiella ictaluri (strain 93-146), this protein is Universal stress protein B.